We begin with the raw amino-acid sequence, 439 residues long: Protein translocase subunit SecY (439 aa).

10 consecutive transmembrane segments (helical) span residues 23-43, 77-97, 125-145, 154-174, 187-207, 217-237, 274-294, 317-337, 369-389, and 397-417; these read IASV…PIPG, IFAL…LLTL, LVLA…ISGM, FYFY…LMWL, ISII…VHTI, ILLF…VVFI, VIPA…ISWF, YLIL…GLVF, IMIR…LIPE, and VPFY…MDFI.

Belongs to the SecY/SEC61-alpha family. As to quaternary structure, component of the Sec protein translocase complex. Heterotrimer consisting of SecY, SecE and SecG subunits. The heterotrimers can form oligomers, although 1 heterotrimer is thought to be able to translocate proteins. Interacts with the ribosome. Interacts with SecDF, and other proteins may be involved. Interacts with SecA.

It is found in the cell membrane. Its function is as follows. The central subunit of the protein translocation channel SecYEG. Consists of two halves formed by TMs 1-5 and 6-10. These two domains form a lateral gate at the front which open onto the bilayer between TMs 2 and 7, and are clamped together by SecE at the back. The channel is closed by both a pore ring composed of hydrophobic SecY resides and a short helix (helix 2A) on the extracellular side of the membrane which forms a plug. The plug probably moves laterally to allow the channel to open. The ring and the pore may move independently. The chain is Protein translocase subunit SecY from Buchnera aphidicola subsp. Schizaphis graminum (strain Sg).